The primary structure comprises 445 residues: tRNA-2-methylthio-N(6)-dimethylallyladenosine synthase (445 aa).

Residues 3 to 124 (KKLYIKTYGC…LPELISKVVR (122 aa)) form the MTTase N-terminal domain. Residues Cys-12, Cys-48, Cys-87, Cys-162, Cys-166, and Cys-169 each contribute to the [4Fe-4S] cluster site. Positions 148–380 (YTQGASSFIS…QKELATQQLA (233 aa)) constitute a Radical SAM core domain. In terms of domain architecture, TRAM spans 383–445 (ESCVGSTMKV…ALNSLTGEIL (63 aa)).

Belongs to the methylthiotransferase family. MiaB subfamily. In terms of assembly, monomer. Requires [4Fe-4S] cluster as cofactor.

The protein localises to the cytoplasm. It carries out the reaction N(6)-dimethylallyladenosine(37) in tRNA + (sulfur carrier)-SH + AH2 + 2 S-adenosyl-L-methionine = 2-methylsulfanyl-N(6)-dimethylallyladenosine(37) in tRNA + (sulfur carrier)-H + 5'-deoxyadenosine + L-methionine + A + S-adenosyl-L-homocysteine + 2 H(+). Its function is as follows. Catalyzes the methylthiolation of N6-(dimethylallyl)adenosine (i(6)A), leading to the formation of 2-methylthio-N6-(dimethylallyl)adenosine (ms(2)i(6)A) at position 37 in tRNAs that read codons beginning with uridine. The sequence is that of tRNA-2-methylthio-N(6)-dimethylallyladenosine synthase from Rickettsia typhi (strain ATCC VR-144 / Wilmington).